Reading from the N-terminus, the 493-residue chain is Galactose-1-phosphate uridylyltransferase 2 (493 aa).

The protein belongs to the galactose-1-phosphate uridylyltransferase type 2 family.

The protein resides in the cytoplasm. It catalyses the reaction alpha-D-galactose 1-phosphate + UDP-alpha-D-glucose = alpha-D-glucose 1-phosphate + UDP-alpha-D-galactose. It participates in carbohydrate metabolism; galactose metabolism. In Streptococcus pneumoniae serotype 4 (strain ATCC BAA-334 / TIGR4), this protein is Galactose-1-phosphate uridylyltransferase 2 (galT2).